The following is a 191-amino-acid chain: Prostaglandin-H2 D-isomerase (191 aa).

A signal peptide spans 1-24 (MATPNRPWMGLLLLGVLGVLQTPA). A glycan (N-linked (GlcNAc...) asparagine) is linked at asparagine 51. The active-site Nucleophile is the cysteine 65. Asparagine 78 carries an N-linked (GlcNAc...) asparagine glycan. Cysteines 89 and 186 form a disulfide.

It belongs to the calycin superfamily. Lipocalin family. As to quaternary structure, monomer. As to expression, in the male reproductive system, it is expressed in the testis and epididymis, and is secreted into the seminal fluid.

It is found in the rough endoplasmic reticulum. It localises to the nucleus membrane. The protein localises to the golgi apparatus. Its subcellular location is the cytoplasm. The protein resides in the perinuclear region. It is found in the secreted. The catalysed reaction is prostaglandin H2 = prostaglandin D2. In terms of biological role, catalyzes the conversion of PGH2 to PGD2, a prostaglandin involved in smooth muscle contraction/relaxation and a potent inhibitor of platelet aggregation. Involved in a variety of CNS functions, such as sedation, NREM sleep and PGE2-induced allodynia, and may have an anti-apoptotic role in oligodendrocytes. Binds small non-substrate lipophilic molecules, including biliverdin, bilirubin, retinal, retinoic acid and thyroid hormone, and may act as a scavenger for harmful hydrophobic molecules and as a secretory retinoid and thyroid hormone transporter. Possibly involved in development and maintenance of the blood-brain, blood-retina, blood-aqueous humor and blood-testis barrier. It is likely to play important roles in both maturation and maintenance of the central nervous system and male reproductive system. Involved in PLA2G3-dependent maturation of mast cells. PLA2G3 is secreted by immature mast cells and acts on nearby fibroblasts upstream to PTDGS to synthesize PGD2, which in turn promotes mast cell maturation and degranulation via PTGDR. The protein is Prostaglandin-H2 D-isomerase (PTGDS) of Ovis aries (Sheep).